The sequence spans 355 residues: Peptide chain release factor 1 (355 aa).

Gln-233 is subject to N5-methylglutamine.

This sequence belongs to the prokaryotic/mitochondrial release factor family. In terms of processing, methylated by PrmC. Methylation increases the termination efficiency of RF1.

Its subcellular location is the cytoplasm. Functionally, peptide chain release factor 1 directs the termination of translation in response to the peptide chain termination codons UAG and UAA. The sequence is that of Peptide chain release factor 1 from Caldicellulosiruptor bescii (strain ATCC BAA-1888 / DSM 6725 / KCTC 15123 / Z-1320) (Anaerocellum thermophilum).